The chain runs to 375 residues: Esterase AN6793 (375 aa).

Residues 138–158 are disordered; it reads RHPQPGLDPGHGHRHKRMPPL.

Belongs to the sidJ hydrolase family. Homodimer.

The protein operates within secondary metabolite biosynthesis. Functionally, esterase; part of a cluster that mediates the biosynthesis of a yet undetermined secondary metabolite. With the HR-PKS AN6791, produces a pathway intermediate compound with molecular weight 258. In Emericella nidulans (strain FGSC A4 / ATCC 38163 / CBS 112.46 / NRRL 194 / M139) (Aspergillus nidulans), this protein is Esterase AN6793.